We begin with the raw amino-acid sequence, 317 residues long: Methionyl-tRNA formyltransferase (317 aa).

112-115 (SLLP) is a binding site for (6S)-5,6,7,8-tetrahydrofolate.

The protein belongs to the Fmt family.

It catalyses the reaction L-methionyl-tRNA(fMet) + (6R)-10-formyltetrahydrofolate = N-formyl-L-methionyl-tRNA(fMet) + (6S)-5,6,7,8-tetrahydrofolate + H(+). Attaches a formyl group to the free amino group of methionyl-tRNA(fMet). The formyl group appears to play a dual role in the initiator identity of N-formylmethionyl-tRNA by promoting its recognition by IF2 and preventing the misappropriation of this tRNA by the elongation apparatus. The sequence is that of Methionyl-tRNA formyltransferase from Mycoplasma capricolum subsp. capricolum (strain California kid / ATCC 27343 / NCTC 10154).